A 284-amino-acid polypeptide reads, in one-letter code: tRNA dimethylallyltransferase (284 aa).

Position 6–13 (6–13 (GPTASGKS)) interacts with ATP. 8–13 (TASGKS) is a substrate binding site. The segment at 31–34 (DSLS) is interaction with substrate tRNA.

The protein belongs to the IPP transferase family. Monomer. Mg(2+) serves as cofactor.

It carries out the reaction adenosine(37) in tRNA + dimethylallyl diphosphate = N(6)-dimethylallyladenosine(37) in tRNA + diphosphate. Functionally, catalyzes the transfer of a dimethylallyl group onto the adenine at position 37 in tRNAs that read codons beginning with uridine, leading to the formation of N6-(dimethylallyl)adenosine (i(6)A). The sequence is that of tRNA dimethylallyltransferase from Nautilia profundicola (strain ATCC BAA-1463 / DSM 18972 / AmH).